We begin with the raw amino-acid sequence, 169 residues long: Large ribosomal subunit protein uL10 (169 aa).

This sequence belongs to the universal ribosomal protein uL10 family. As to quaternary structure, part of the ribosomal stalk of the 50S ribosomal subunit. The N-terminus interacts with L11 and the large rRNA to form the base of the stalk. The C-terminus forms an elongated spine to which L12 dimers bind in a sequential fashion forming a multimeric L10(L12)X complex.

Its function is as follows. Forms part of the ribosomal stalk, playing a central role in the interaction of the ribosome with GTP-bound translation factors. The polypeptide is Large ribosomal subunit protein uL10 (Staphylococcus saprophyticus subsp. saprophyticus (strain ATCC 15305 / DSM 20229 / NCIMB 8711 / NCTC 7292 / S-41)).